We begin with the raw amino-acid sequence, 207 residues long: ATP-dependent Clp protease proteolytic subunit (207 aa).

The active-site Nucleophile is Ser-111. Residue His-136 is part of the active site.

This sequence belongs to the peptidase S14 family. Fourteen ClpP subunits assemble into 2 heptameric rings which stack back to back to give a disk-like structure with a central cavity, resembling the structure of eukaryotic proteasomes. Component of the ClpAP and ClpXP complexes.

The protein resides in the cytoplasm. The enzyme catalyses Hydrolysis of proteins to small peptides in the presence of ATP and magnesium. alpha-casein is the usual test substrate. In the absence of ATP, only oligopeptides shorter than five residues are hydrolyzed (such as succinyl-Leu-Tyr-|-NHMec, and Leu-Tyr-Leu-|-Tyr-Trp, in which cleavage of the -Tyr-|-Leu- and -Tyr-|-Trp bonds also occurs).. Cleaves peptides in various proteins in a process that requires ATP hydrolysis. Has a chymotrypsin-like activity. Plays a major role in the degradation of misfolded proteins. In Salmonella enteritidis PT4 (strain P125109), this protein is ATP-dependent Clp protease proteolytic subunit.